Consider the following 319-residue polypeptide: Malate dehydrogenase (319 aa).

NAD(+) contacts are provided by residues 11–16 (GAGNVG) and Asp-36. Arg-85 and Arg-91 together coordinate substrate. NAD(+) contacts are provided by residues Asn-98 and 121 to 123 (VSN). Residues Asn-123 and Arg-154 each coordinate substrate. Residue His-178 is the Proton acceptor of the active site.

Belongs to the LDH/MDH superfamily. MDH type 3 family.

It catalyses the reaction (S)-malate + NAD(+) = oxaloacetate + NADH + H(+). In terms of biological role, catalyzes the reversible oxidation of malate to oxaloacetate. This Sulfurimonas denitrificans (strain ATCC 33889 / DSM 1251) (Thiomicrospira denitrificans (strain ATCC 33889 / DSM 1251)) protein is Malate dehydrogenase.